Here is a 729-residue protein sequence, read N- to C-terminus: Phenylalanine ammonia-lyase (729 aa).

Tyrosine 77 functions as the Proton donor/acceptor in the catalytic mechanism. Positions 182 to 184 (ASG) form a cross-link, 5-imidazolinone (Ala-Gly). Serine 183 carries the 2,3-didehydroalanine (Ser) modification. Residues asparagine 241, glutamine 336, arginine 342, asparagine 372, lysine 443, glutamate 471, and asparagine 474 each coordinate (E)-cinnamate.

Belongs to the PAL/histidase family. In terms of processing, contains an active site 4-methylidene-imidazol-5-one (MIO), which is formed autocatalytically by cyclization and dehydration of residues Ala-Ser-Gly.

The protein localises to the cytoplasm. The enzyme catalyses L-phenylalanine = (E)-cinnamate + NH4(+). Its pathway is secondary metabolite biosynthesis. The protein operates within phenylpropanoid metabolism; trans-cinnamate biosynthesis; trans-cinnamate from L-phenylalanine: step 1/1. Phenylalanine ammonia-lyase; part of the gene cluster that mediates the biosynthesis of squalestatin S1 (SQS1, also known as zaragozic acid A), a heavily oxidized fungal polyketide that offers potent cholesterol lowering activity by targeting squalene synthase (SS). SQS1 is composed of a 2,8-dioxobicyclic[3.2.1]octane-3,4,5-tricarboxyclic acid core that is connected to two lipophilic polyketide arms. These initial steps feature the priming of an unusual benzoic acid starter unit onto the highly reducing polyketide synthase pks2, followed by oxaloacetate extension and product release to generate a tricarboxylic acid containing product. The phenylalanine ammonia lyase (PAL) M7 and the acyl-CoA ligase M9 are involved in transforming phenylalanine into benzoyl-CoA. The citrate synthase-like protein R3 is involved in connecting the C-alpha-carbons of the hexaketide chain and oxaloacetate to afford the tricarboxylic acid unit. The potential hydrolytic enzymes, M8 and M10, are in close proximity to pks2 and may participate in product release. On the other side, the tetraketide arm is synthesized by a the squalestatin tetraketide synthase pks1 and enzymatically esterified to the core in the last biosynthetic step, by the acetyltransferase M4. The biosynthesis of the tetraketide must involve 3 rounds of chain extension. After the first and second rounds methyl-transfer occurs, and in all rounds of extension the ketoreductase and dehydratase are active. The enoyl reductase and C-MeT of pks1 are not active in the final round of extension. The acetyltransferase M4 appears to have a broad substrate selectivity for its acyl CoA substrate, allowing the in vitro synthesis of novel squalestatins. The biosynthesis of SQS1 requires several oxidative steps likely performed by oxidoreductases M1, R1 and R2. Finally, in support of the identification of the cluster as being responsible for SQS1 production, the cluster contains a gene encoding a putative squalene synthase (SS) R6, suggesting a likely mechanism for self-resistance. The protein is Phenylalanine ammonia-lyase of Phoma sp. (strain ATCC 20986 / MF5453).